Consider the following 722-residue polypeptide: MAVALLVALCVVSSRMALPSEAVPFYRQDSEVCNSPVCQKAAQTLLESMDTSVDPCQDFYQYACGEWIRKHPIPEEKFRISPLDALYDNVLDTVAEILKNATSENHATSVLKSANYFQACMDAEARETQGVEPLKNLLTSLGGWPMATPGWSGANYHWQTQVATVTRNLGIRPIIDVFVDADANRTSQHIINLDQADFGLGRNQLINLTSSSRTQEIVAGYRNYIIASAKLLNPNADDIQLANDADEIIQFESTLAQFSTPPEERRDASSWYHKMTVAEVQTVTENTYFQWTEFLNTVLKEFPQVMPETEVILYERDYTKNVLKLAHETNPRILANYIGWIVLMKEGYHTTRQFRENKFQFEKVQIGIEKEEKLERVCTDHTIGLLGYAVGRLYVDKFFTEEEKQDIDELVENIRSAYKSTLRNNTWMDHVTRNKAIDKLEAMINKMAYPTWIKNDNELNEYYRSVPAINRDEFFSSLLKVTKVVKAIQLGKWNKPTDRIKDWITTPAVVNAFYSPDSNSMSFPAGILNWPLYQYGTSPALNYGAIGAIIGHEMSHGFDDQGGQTDPEGNLVDWWLEETKAKFNQKADCFRKQYSSYLEPTTNMHLNGNNTVGENIADNGAVRNAFIAYKMHLLHSQNNHVMRKKTLPGLSATAEQLFFLGYSTMWCGAERKESLEWSIQYDSHTPSEFRAVVPLTNSRSFAEAFGCASGTPMNPTHKCLLW.

The signal sequence occupies residues 1 to 17; it reads MAVALLVALCVVSSRMA. The 691-residue stretch at 32 to 722 folds into the Peptidase M13 domain; the sequence is VCNSPVCQKA…MNPTHKCLLW (691 aa). Disulfide bonds link Cys-33–Cys-38, Cys-56–Cys-707, Cys-64–Cys-667, Cys-120–Cys-378, and Cys-589–Cys-719. Residues Asn-100, Asn-184, Asn-207, and Asn-424 are each glycosylated (N-linked (GlcNAc...) asparagine). His-552 contacts Zn(2+). Residue Glu-553 is part of the active site. Residue His-556 coordinates Zn(2+). Asn-609 carries N-linked (GlcNAc...) asparagine glycosylation. Zn(2+) is bound at residue Glu-614. Asp-618 acts as the Proton donor in catalysis.

Belongs to the peptidase M13 family. The cofactor is Zn(2+). In terms of processing, contains 5 disulfide bonds. In terms of tissue distribution, expressed by the venom gland.

Its subcellular location is the secreted. This Trittame loki (Brush-footed trapdoor spider) protein is Neprilysin-1.